Consider the following 73-residue polypeptide: Large ribosomal subunit protein bL31 (73 aa).

This sequence belongs to the bacterial ribosomal protein bL31 family. Type A subfamily. In terms of assembly, part of the 50S ribosomal subunit.

Its function is as follows. Binds the 23S rRNA. In Bartonella bacilliformis (strain ATCC 35685 / KC583 / Herrer 020/F12,63), this protein is Large ribosomal subunit protein bL31.